Reading from the N-terminus, the 914-residue chain is MDVGFTRSAVQTLSRSHCKNIKQKISQWEGRANGVTKTAKFHPKDFGVRYNCHQESPPHKRPTGEERNGALPRNTDVKSRDQSEDEGEGGECRGSHPSEAGLDSSLVCARVKQIEGCQAVAVGPEASLPPGNFYTSQIPWRSIDGLSPDKPLNLALAPCNSTGREPDLSVLDSSYGITKSLENIYYEPEGQECGPSINPLPKPRRTFRYLSESDGIPYKERNCDQKYCESISCVDPSLASSQDPEPKKYGGKIRGRSKRKSFEFEDIQHFRNSRKIHEELGRNAGSALYYTQSEDNIYEDIIYPAKENPYEDIPVQSFPVWRSPSAWRLPPAKSAFRTPKLPPKPQFFQRKTMELKNSQAYFRSKITKDTTLPVTLTEWKLFRAGEVANKKKRNLPPLVLKINDTFESKRGKKRVKLQPYTGKEAPSSKGETSGNESDAEYLPKNRHKRLAQLQPSSKRNPHYQTLERDLIELQEQQLFELFVVVSLQKKPAGYTPQVIQQFPSKGDHGYKQSKDTEERLKVIPRFCFPDSEDSAPTLELKSETFSFVLTGEDGSRWFGYCKKLLPEGRGKRLPEVYCMVSRLGCFNLFSKILDEVEKRREMSPALVYPFMRSVMEAPFPAPGRTITVKSYLPGAGDESIELCRPLDSRLEHVDFECLFKCLSVRHLIRVCASLLLERRVIFVANSLSTLSKCGHAVVATLYPFTWQHTYIPVLPVSMIDIVCSPTPFFIGILSCSLPHLQDLPIEEVLIVDLCADRFLQEVSDEDEILPPKLQAALVQILEDRDEVLAQEQQFSQEVTLSSLVSEAFVRFFVELVGHYSLNMTVTERGERVFQREPFRKSHTSRSVRHFLDLFMETQMFAGFVQDRELRQSGVKGLFEVRALQYLETIPESEPSGVNRILRSLGSKMKFLHKK.

Residues 46-98 (FGVRYNCHQESPPHKRPTGEERNGALPRNTDVKSRDQSEDEGEGGECRGSHPS) form a disordered region. A compositionally biased stretch (basic and acidic residues) spans 56-68 (SPPHKRPTGEERN). Serine 261 bears the Phosphoserine mark. Positions 411 to 446 (GKKRVKLQPYTGKEAPSSKGETSGNESDAEYLPKNR) are disordered. Residues 480-627 (ELFVVVSLQK…PFPAPGRTIT (148 aa)) form the uDENN domain. Residues 649–782 (RLEHVDFECL…LQAALVQILE (134 aa)) enclose the cDENN domain. The dDENN domain maps to 784–874 (RDEVLAQEQQ…QDRELRQSGV (91 aa)).

Guanine nucleotide exchange factor (GEF) which may activate RAB9A and RAB9B. Promotes the exchange of GDP to GTP, converting inactive GDP-bound Rab proteins into their active GTP-bound form. In Mus musculus (Mouse), this protein is DENN domain-containing protein 2C (Dennd2c).